We begin with the raw amino-acid sequence, 137 residues long: Prefoldin subunit alpha (137 aa).

It belongs to the prefoldin subunit alpha family. As to quaternary structure, heterohexamer of two alpha and four beta subunits.

Its subcellular location is the cytoplasm. Molecular chaperone capable of stabilizing a range of proteins. Seems to fulfill an ATP-independent, HSP70-like function in archaeal de novo protein folding. In Archaeoglobus fulgidus (strain ATCC 49558 / DSM 4304 / JCM 9628 / NBRC 100126 / VC-16), this protein is Prefoldin subunit alpha (pfdA).